The chain runs to 167 residues: Leptin (167 aa).

The first 21 residues, 1-21, serve as a signal peptide directing secretion; that stretch reads MCWRPLCRFLWLWSYLSYVQA. A disulfide bond links cysteine 117 and cysteine 167.

Belongs to the leptin family.

It is found in the secreted. In terms of biological role, key player in the regulation of energy balance and body weight control. Once released into the circulation, has central and peripheral effects by binding LEPR, found in many tissues, which results in the activation of several major signaling pathways. In the hypothalamus, acts as an appetite-regulating factor that induces a decrease in food intake and an increase in energy consumption by inducing anorexinogenic factors and suppressing orexigenic neuropeptides, also regulates bone mass and secretion of hypothalamo-pituitary-adrenal hormones. In the periphery, increases basal metabolism, influences reproductive function, regulates pancreatic beta-cell function and insulin secretion, is pro-angiogenic for endothelial cell and affects innate and adaptive immunity. In the arcuate nucleus of the hypothalamus, activates by depolarization POMC neurons inducing FOS and SOCS3 expression to release anorexigenic peptides and inhibits by hyperpolarization NPY neurons inducing SOCS3 with a consequent reduction on release of orexigenic peptides. In addition to its known satiety inducing effect, has a modulatory role in nutrient absorption. In the intestine, reduces glucose absorption by enterocytes by activating PKC and leading to a sequential activation of p38, PI3K and ERK signaling pathways which exerts an inhibitory effect on glucose absorption. Acts as a growth factor on certain tissues, through the activation of different signaling pathways increases expression of genes involved in cell cycle regulation such as CCND1, via JAK2-STAT3 pathway, or VEGFA, via MAPK1/3 and PI3K-AKT1 pathways. May also play an apoptotic role via JAK2-STAT3 pathway and up-regulation of BIRC5 expression. Pro-angiogenic, has mitogenic activity on vascular endothelial cells and plays a role in matrix remodeling by regulating the expression of matrix metalloproteinases (MMPs) and tissue inhibitors of metalloproteinases (TIMPs). In innate immunity, modulates the activity and function of neutrophils by increasing chemotaxis and the secretion of oxygen radicals. Increases phagocytosis by macrophages and enhances secretion of pro-inflammatory mediators. Increases cytotoxic ability of NK cells. Plays a pro-inflammatory role, in synergy with IL1B, by inducing NOS2 which promotes the production of IL6, IL8 and Prostaglandin E2, through a signaling pathway that involves JAK2, PI3K, MAP2K1/MEK1 and MAPK14/p38. In adaptive immunity, promotes the switch of memory T-cells towards T helper-1 cell immune responses. Increases CD4(+)CD25(-) T-cell proliferation and reduces autophagy during TCR (T-cell receptor) stimulation, through MTOR signaling pathway activation and BCL2 up-regulation. In Rattus norvegicus (Rat), this protein is Leptin (Lep).